The primary structure comprises 264 residues: Thymidylate synthase (264 aa).

Arginine 21 is a binding site for dUMP. Histidine 51 provides a ligand contact to (6R)-5,10-methylene-5,6,7,8-tetrahydrofolate. 126 to 127 (RR) contacts dUMP. Cysteine 146 acts as the Nucleophile in catalysis. DUMP is bound by residues 166 to 169 (RSAD), asparagine 177, and 207 to 209 (HLY). Aspartate 169 lines the (6R)-5,10-methylene-5,6,7,8-tetrahydrofolate pocket. Alanine 263 is a (6R)-5,10-methylene-5,6,7,8-tetrahydrofolate binding site.

The protein belongs to the thymidylate synthase family. Bacterial-type ThyA subfamily. Homodimer.

It is found in the cytoplasm. The catalysed reaction is dUMP + (6R)-5,10-methylene-5,6,7,8-tetrahydrofolate = 7,8-dihydrofolate + dTMP. Its pathway is pyrimidine metabolism; dTTP biosynthesis. Catalyzes the reductive methylation of 2'-deoxyuridine-5'-monophosphate (dUMP) to 2'-deoxythymidine-5'-monophosphate (dTMP) while utilizing 5,10-methylenetetrahydrofolate (mTHF) as the methyl donor and reductant in the reaction, yielding dihydrofolate (DHF) as a by-product. This enzymatic reaction provides an intracellular de novo source of dTMP, an essential precursor for DNA biosynthesis. The sequence is that of Thymidylate synthase from Legionella pneumophila (strain Paris).